An 80-amino-acid polypeptide reads, in one-letter code: UPF0154 protein MGAS10270_Spy0296 (80 aa).

The helical transmembrane segment at alanine 4–isoleucine 24 threads the bilayer.

It belongs to the UPF0154 family.

It is found in the cell membrane. This Streptococcus pyogenes serotype M2 (strain MGAS10270) protein is UPF0154 protein MGAS10270_Spy0296.